The following is a 307-amino-acid chain: Histone deacetylase HDT1 (307 aa).

The segment covering 98 to 112 (EDEMDLDSEDEDEEL) has biased composition (acidic residues). Residues 98–280 (EDEMDLDSED…KSGGSVPCKP (183 aa)) form a disordered region. Positions 119-132 (ENGKADEKKQKSQE) are enriched in basic and acidic residues. The span at 151–197 (DDDSDEDETDDSDEDETDDSDEGLSSEEGDDDSSDEDDTSDDEEEDT) shows a compositional bias: acidic residues. The span at 198–211 (PTPKKPEVGKKRPA) shows a compositional bias: basic and acidic residues. Low complexity predominate over residues 265-277 (SPKSAPKSGGSVP). Residues 276 to 299 (VPCKPCSKSFISETALQAHSRAKM) form a C2H2-type; degenerate zinc finger.

The protein belongs to the histone deacetylase HD2 family. Multimer. Isolated as a trimer composed of 3 proteins of 39, 42 and 45 kDa, possibly a homotrimer with different phosphorylation status or a heterotrimer with HDT2 and/or HDT3. Post-translationally, the N-terminus is blocked. Phosphorylated. Required for enzyme activity.

It is found in the nucleus. The protein localises to the nucleolus. Inhibited by 3-(4-Aroyl-1-methyl-1H-pyrrol-2-yl)-N-hydroxy-2-propenamides. 3-(1-methyl-4-phenylacetyl-1H-pyrrol-2-yl)-N-hydroxy-2-propenamide 1b and 3-[1-methyl-4-(3-phenyl-2-propenoyl)-1H-pyrrol-2-yl]-N-hydroxy-2-propenamide 1c are very potent inhibitors. Its function is as follows. Mediates the deacetylation of lysine residues on the N-terminal part of the core histones (H2A, H2B, H3 and H4). Histone deacetylation gives a tag for epigenetic repression and plays an important role in transcriptional regulation, cell cycle progression and developmental events. Able to deacetylate all 4 core histones. This chain is Histone deacetylase HDT1 (HDT1), found in Zea mays (Maize).